A 398-amino-acid polypeptide reads, in one-letter code: Homocysteine-responsive endoplasmic reticulum-resident ubiquitin-like domain member 2 protein (398 aa).

In terms of domain architecture, Ubiquitin-like spans 11–90 (VTLVIKAPNQ…HMVHLVCASR (80 aa)). Disordered stretches follow at residues 90-143 (RTPP…SIRH) and 212-247 (NQST…NVAP). The segment covering 96–125 (PKASKSSKSMGTSSSGRSSSSGSANPGSTS) has biased composition (low complexity). Over residues 233 to 245 (NPPPNPPRAPPNV) the composition is skewed to pro residues. The helical transmembrane segment at 298 to 318 (FVMVMGALILVYMHQAGWFPL) threads the bilayer.

It is found in the membrane. In terms of biological role, could be involved in the unfolded protein response (UPR) pathway. The sequence is that of Homocysteine-responsive endoplasmic reticulum-resident ubiquitin-like domain member 2 protein (herpud2) from Xenopus laevis (African clawed frog).